The following is a 426-amino-acid chain: uncharacterized protein (426 aa).

Histidine 277 lines the Zn(2+) pocket. Glutamate 278 is an active-site residue. 2 residues coordinate Zn(2+): histidine 281 and glutamate 357.

It belongs to the peptidase M48B family. It depends on Zn(2+) as a cofactor.

This is an uncharacterized protein from Bacillus subtilis (strain 168).